A 253-amino-acid chain; its full sequence is Phosphate import ATP-binding protein PstB 1 (253 aa).

Positions 7–248 (LQIRDLSVYY…PKRKETEDYI (242 aa)) constitute an ABC transporter domain. 39–46 (GPSGSGKS) lines the ATP pocket.

The protein belongs to the ABC transporter superfamily. Phosphate importer (TC 3.A.1.7) family. As to quaternary structure, the complex is composed of two ATP-binding proteins (PstB), two transmembrane proteins (PstC and PstA) and a solute-binding protein (PstS).

It localises to the cell membrane. It carries out the reaction phosphate(out) + ATP + H2O = ADP + 2 phosphate(in) + H(+). In terms of biological role, part of the ABC transporter complex PstSACB involved in phosphate import. Responsible for energy coupling to the transport system. This is Phosphate import ATP-binding protein PstB 1 from Streptococcus pyogenes serotype M12 (strain MGAS9429).